A 460-amino-acid chain; its full sequence is Argininosuccinate lyase (460 aa).

It belongs to the lyase 1 family. Argininosuccinate lyase subfamily.

The protein localises to the cytoplasm. It carries out the reaction 2-(N(omega)-L-arginino)succinate = fumarate + L-arginine. It participates in amino-acid biosynthesis; L-arginine biosynthesis; L-arginine from L-ornithine and carbamoyl phosphate: step 3/3. In Limosilactobacillus fermentum (strain NBRC 3956 / LMG 18251) (Lactobacillus fermentum), this protein is Argininosuccinate lyase.